Here is a 333-residue protein sequence, read N- to C-terminus: Ketol-acid reductoisomerase (NADP(+)) (333 aa).

The 181-residue stretch at 1-181 (MKVYYDQDAD…GGARSGVIET (181 aa)) folds into the KARI N-terminal Rossmann domain. Residues 24–27 (YGSQ), R47, and 82–85 (DEVQ) contribute to the NADP(+) site. The active site involves H107. G133 serves as a coordination point for NADP(+). Residues 182 to 327 (TFREETETDL…KELRSMMPWL (146 aa)) form the KARI C-terminal knotted domain. Positions 190, 194, 226, and 230 each coordinate Mg(2+). Residue S251 coordinates substrate.

Belongs to the ketol-acid reductoisomerase family. Requires Mg(2+) as cofactor.

The catalysed reaction is (2R)-2,3-dihydroxy-3-methylbutanoate + NADP(+) = (2S)-2-acetolactate + NADPH + H(+). It catalyses the reaction (2R,3R)-2,3-dihydroxy-3-methylpentanoate + NADP(+) = (S)-2-ethyl-2-hydroxy-3-oxobutanoate + NADPH + H(+). It participates in amino-acid biosynthesis; L-isoleucine biosynthesis; L-isoleucine from 2-oxobutanoate: step 2/4. It functions in the pathway amino-acid biosynthesis; L-valine biosynthesis; L-valine from pyruvate: step 2/4. Involved in the biosynthesis of branched-chain amino acids (BCAA). Catalyzes an alkyl-migration followed by a ketol-acid reduction of (S)-2-acetolactate (S2AL) to yield (R)-2,3-dihydroxy-isovalerate. In the isomerase reaction, S2AL is rearranged via a Mg-dependent methyl migration to produce 3-hydroxy-3-methyl-2-ketobutyrate (HMKB). In the reductase reaction, this 2-ketoacid undergoes a metal-dependent reduction by NADPH to yield (R)-2,3-dihydroxy-isovalerate. This Desulfovibrio desulfuricans (strain ATCC 27774 / DSM 6949 / MB) protein is Ketol-acid reductoisomerase (NADP(+)).